A 307-amino-acid polypeptide reads, in one-letter code: 4-hydroxy-tetrahydrodipicolinate synthase (307 aa).

Thr49 is a binding site for pyruvate. Tyr138 serves as the catalytic Proton donor/acceptor. Lys166 (schiff-base intermediate with substrate) is an active-site residue. A pyruvate-binding site is contributed by Ile207.

It belongs to the DapA family. As to quaternary structure, homotetramer; dimer of dimers.

The protein resides in the cytoplasm. It carries out the reaction L-aspartate 4-semialdehyde + pyruvate = (2S,4S)-4-hydroxy-2,3,4,5-tetrahydrodipicolinate + H2O + H(+). The protein operates within amino-acid biosynthesis; L-lysine biosynthesis via DAP pathway; (S)-tetrahydrodipicolinate from L-aspartate: step 3/4. In terms of biological role, catalyzes the condensation of (S)-aspartate-beta-semialdehyde [(S)-ASA] and pyruvate to 4-hydroxy-tetrahydrodipicolinate (HTPA). This chain is 4-hydroxy-tetrahydrodipicolinate synthase, found in Limosilactobacillus reuteri (strain DSM 20016) (Lactobacillus reuteri).